A 129-amino-acid polypeptide reads, in one-letter code: Cortical cell-delineating protein (129 aa).

The or 21 signal peptide spans 1 to 19 (MAPKVALFLALSLLFAATA). N-linked (GlcNAc...) asparagine glycosylation is present at asparagine 25. 2 tandem repeats follow at residues 29–34 (PVVPTP) and 35–40 (PVVPTP). The 2 X 6 AA tandem repeats of P-V-V-P-T-P stretch occupies residues 29-40 (PVVPTPPVVPTP).

It to carrot DC2.15 and PEMB3. In terms of tissue distribution, cortical ground meristem of developing roots.

Delineates a novel subset of developing cortical cells. It is probably involved in some aspect of transport of molecules to or from the vasculature. In Zea mays (Maize), this protein is Cortical cell-delineating protein.